Reading from the N-terminus, the 627-residue chain is Ras and EF-hand domain-containing protein homolog (627 aa).

The stretch at 55-245 (YERVIRNFLR…RKLHDSNDGL (191 aa)) forms a coiled coil. Serine 266 and serine 272 each carry phosphoserine. GTP is bound by residues 438–443 (AVGKSS), 541–544 (NKAD), and 578–579 (AK).

Belongs to the small GTPase superfamily. Rab family. In terms of assembly, homodimer. Interacts with the dynein-dynactin complex.

The protein resides in the cytoplasm. It localises to the perinuclear region. Functionally, binds predominantly GDP, and also GTP. Acts as a dynein adapter protein that activates dynein-mediated transport and dynein-dynactin motility on microtubules. The polypeptide is Ras and EF-hand domain-containing protein homolog (Rasef) (Mus musculus (Mouse)).